Here is a 194-residue protein sequence, read N- to C-terminus: Potassium-transporting ATPase KdpC subunit (194 aa).

The helical transmembrane segment at 12-34 (LFLLLLTGGVYPLLTTALGQWWF) threads the bilayer.

The protein belongs to the KdpC family. The system is composed of three essential subunits: KdpA, KdpB and KdpC.

The protein resides in the cell inner membrane. In terms of biological role, part of the high-affinity ATP-driven potassium transport (or Kdp) system, which catalyzes the hydrolysis of ATP coupled with the electrogenic transport of potassium into the cytoplasm. This subunit acts as a catalytic chaperone that increases the ATP-binding affinity of the ATP-hydrolyzing subunit KdpB by the formation of a transient KdpB/KdpC/ATP ternary complex. This chain is Potassium-transporting ATPase KdpC subunit, found in Salmonella agona (strain SL483).